Consider the following 390-residue polypeptide: Probable purine permease 7 (390 aa).

A run of 10 helical transmembrane segments spans residues 42-62, 74-94, 110-130, 131-151, 169-189, 205-225, 244-264, 286-306, 312-332, and 341-361; these read WLRV…ATIL, TYVV…FRFF, SPSF…VSAY, AYLS…LILA, FTPL…LLVV, VIGF…LSLI, LAIY…FASG, TLAS…GLIF, FSNS…VIVF, and IFSI…HYLD.

It belongs to the purine permeases (TC 2.A.7.14) family.

It localises to the membrane. In Arabidopsis thaliana (Mouse-ear cress), this protein is Probable purine permease 7 (PUP7).